The chain runs to 155 residues: Protein PtsT (155 aa).

This is Protein PtsT (ptsT) from Geobacillus stearothermophilus (Bacillus stearothermophilus).